The chain runs to 884 residues: TTSCTDAKGKQYRTADGTCNNVNKPTVGSSMDKFKRDVKPQYDDKKGDPRTKGRCLYKTEKGCYRPDLPSARAISVVVHSKQTSVDDDSSKSSAVSPKMPSMGNLQSLGNLLSLGSVPVPAPAPAPEPVSAPSVDIAPAQPVAGPSITDLLGLMSIIQKPKSKPKPKPKPKPQPKPQPESKPILSQGAIGDILGLLGTLVASPEKETPVSSQPDDSISGLMGKVDEPRIRTPKKSPRKKARQSIFRRRDDRKDDRKGLRGTKGRRDDSDDNDDSDDDDDDIEVRISNVFATAAIKFVAALSPDYIDIRGRKIRLRDTYNNPEMVFDELPELIEEMLQQPTEERNRFISKELTDHFLEDGSRSFDEVASIIQRGRDHGVPPYNWFRQFCGLPIVRSFNSRVFGDAGPYLRKVYKSVDDIDIYTGAMSEPNLPGSLLGETFSCIFARQFRDLKFGDSFFYLSDDPLRGFSKEQRRELDTITLSKAMCFVFGLEAVQMNPLRVPSAQNPLSDCEQIPSFFSFLEDPSEGPRSNLLSRVSQSESVASLSGIMPRFFDAESAGPSMKDNGYEGVGNVLPPAFTTNGVSKTVVGASPRGSERFRDVEVEDPEGGFGMPLPGVPIPSMSSNTDAVSQGDPLNELTQMGGTVDGEVEVEEPEIPGPQEGKASGSLPRAFTDGRQMPLGSSPGSLGGVQGSATQPDALDPTILPGVPLDLQPKAQDPTKLPGVPEYLQPKPKSSGLSTQGAVGGEMGKGEIELEDQLGSHGVAGGAVEVGEAEGAAGGIDGSVGSGGMGGSVGVGGSGGMGGSVGVGGMGGSVGVGGSGGMGGSVGVGGMGGSVGVGGSVGSGGSGGSRGAGGSGDDGDDCCQDDSKCSDDEKQKYCKNSDTK.

Disordered stretches follow at residues 1-53 (TTSC…RTKG), 78-188 (VHSK…SQGA), 204-279 (EKET…DDDD), 653-695 (PEIP…SATQ), 710-744 (DLQP…GAVG), and 828-884 (VGGM…SDTK). Over residues 17–29 (GTCNNVNKPTVGS) the composition is skewed to polar residues. Positions 32 to 53 (DKFKRDVKPQYDDKKGDPRTKG) are enriched in basic and acidic residues. A compositionally biased stretch (low complexity) spans 91-118 (KSSAVSPKMPSMGNLQSLGNLLSLGSVP). A compositionally biased stretch (pro residues) spans 119–129 (VPAPAPAPEPV). 2 stretches are compositionally biased toward basic residues: residues 160 to 172 (PKSK…KPKP) and 230 to 245 (RTPK…QSIF). A compositionally biased stretch (basic and acidic residues) spans 246-267 (RRRDDRKDDRKGLRGTKGRRDD). Positions 268 to 279 (SDDNDDSDDDDD) are enriched in acidic residues. Positions 828–856 (VGGMGGSVGVGGSVGSGGSGGSRGAGGSG) are enriched in gly residues. Over residues 865–884 (DDSKCSDDEKQKYCKNSDTK) the composition is skewed to basic and acidic residues.

The protein belongs to the peroxidase family. In terms of tissue distribution, component of the acid-insoluble and acid-soluble organic matrix of calcified layers of the shell (at protein level).

The protein localises to the secreted. The polypeptide is Peroxidase-like protein 2 (Lottia gigantea (Giant owl limpet)).